The sequence spans 233 residues: Purine nucleoside phosphorylase DeoD-type (233 aa).

Residue His4 coordinates a purine D-ribonucleoside. Residues Gly20, Arg24, Arg43, and 87–90 (RIGT) contribute to the phosphate site. Residues 179-181 (EME) and 203-204 (SD) each bind a purine D-ribonucleoside. Catalysis depends on Asp204, which acts as the Proton donor.

Belongs to the PNP/UDP phosphorylase family. As to quaternary structure, homohexamer; trimer of homodimers.

The catalysed reaction is a purine D-ribonucleoside + phosphate = a purine nucleobase + alpha-D-ribose 1-phosphate. The enzyme catalyses a purine 2'-deoxy-D-ribonucleoside + phosphate = a purine nucleobase + 2-deoxy-alpha-D-ribose 1-phosphate. Catalyzes the reversible phosphorolytic breakdown of the N-glycosidic bond in the beta-(deoxy)ribonucleoside molecules, with the formation of the corresponding free purine bases and pentose-1-phosphate. This Helicobacter pylori (strain J99 / ATCC 700824) (Campylobacter pylori J99) protein is Purine nucleoside phosphorylase DeoD-type.